The following is a 740-amino-acid chain: ATP-dependent RNA helicase DDX1 (740 aa).

Residues 1 to 295 (MAAFSEMGVM…APKALIVEPS (295 aa)) form a necessary for interaction with HNRNPK region. An interaction with dsRNA region spans residues 1–448 (MAAFSEMGVM…DTVHHVVVPV (448 aa)). The necessary for interaction with RELA stretch occupies residues 1 to 525 (MAAFSEMGVM…KIDCDNLEQY (525 aa)). Residues 2–428 (AAFSEMGVMP…SEKIMHFPTW (427 aa)) enclose the Helicase ATP-binding domain. Residue 46-53 (AETGSGKT) participates in ATP binding. The 178-residue stretch at 70 to 247 (DQQEGKKGKT…LKFNFGEEEF (178 aa)) folds into the B30.2/SPRY domain. 2 positions are modified to N6-acetyllysine: Lys-239 and Lys-268. N6-acetyllysine; alternate is present on Lys-281. A Glycyl lysine isopeptide (Lys-Gly) (interchain with G-Cter in SUMO2); alternate cross-link involves residue Lys-281. A DEAD box motif is present at residues 370–373 (DEAD). Ser-481 carries the post-translational modification Phosphoserine. Residues 493–681 (KGEYAVRAIK…QVEPDIKVPV (189 aa)) form the Helicase C-terminal domain. Positions 525–740 (YFMQQGGGPD…YLPNQLFRTF (216 aa)) are necessary for interaction with HNRNPK.

Belongs to the DEAD box helicase family. DDX1 subfamily. Found in a multi-helicase-TICAM1 complex at least composed of DHX36, DDX1, DDX21 and TICAM1; this complex exists in resting cells with or without poly(I:C) RNA ligand stimulation. Interacts with DHX36. Interacts (via B30.2/SPRY domain) with DDX21 (via N-terminus); this interaction serves as bridges to TICAM1. Interacts with FAM98A (via N- and C-terminus). Interacts with MBNL1. Interacts with CSTF2. Interacts with HNRNPK. Interacts with ATM. Interacts with RELA (via C-terminus). Component of the tRNA-splicing ligase complex. Interacts with PHF5A (via C-terminus). Interacts with PQBP1. Interacts with ERCC6. Post-translationally, phosphorylated by ATM kinase; phosphorylation is increased in response to ionizing radiation (IR). Testis-specific. Expressed in the germ line stem cells, spermatogonia and spermatocytes of the testis. Also expressed in the seminoma and nonseminoma types of testicular germ cell tumors (TGCTs) (at protein level).

It localises to the nucleus. The protein resides in the cytoplasm. It is found in the cytosol. The protein localises to the cytoplasmic granule. Its subcellular location is the mitochondrion. The enzyme catalyses ATP + H2O = ADP + phosphate + H(+). Acts as an ATP-dependent RNA helicase, able to unwind both RNA-RNA and RNA-DNA duplexes. Possesses 5' single-stranded RNA overhang nuclease activity. Possesses ATPase activity on various RNA, but not DNA polynucleotides. May play a role in RNA clearance at DNA double-strand breaks (DSBs), thereby facilitating the template-guided repair of transcriptionally active regions of the genome. Together with RELA, acts as a coactivator to enhance NF-kappa-B-mediated transcriptional activation. Acts as a positive transcriptional regulator of cyclin CCND2 expression. Binds to the cyclin CCND2 promoter region. Associates with chromatin at the NF-kappa-B promoter region via association with RELA. Binds to poly(A) RNA. May be involved in 3'-end cleavage and polyadenylation of pre-mRNAs. Component of the tRNA-splicing ligase complex required to facilitate the enzymatic turnover of catalytic subunit RTCB: together with archease (ZBTB8OS), acts by facilitating the guanylylation of RTCB, a key intermediate step in tRNA ligation. Component of a multi-helicase-TICAM1 complex that acts as a cytoplasmic sensor of viral double-stranded RNA (dsRNA) and plays a role in the activation of a cascade of antiviral responses including the induction of pro-inflammatory cytokines via the adapter molecule TICAM1. Specifically binds (via helicase ATP-binding domain) on both short and long poly(I:C) dsRNA. This Mus musculus (Mouse) protein is ATP-dependent RNA helicase DDX1 (Ddx1).